Consider the following 520-residue polypeptide: Ribonuclease Y (520 aa).

The helical transmembrane segment at Ile-3–Leu-23 threads the bilayer. The KH domain occupies Thr-210–Leu-273. The HD domain maps to Val-336–Ala-429.

The protein belongs to the RNase Y family.

The protein resides in the cell membrane. Functionally, endoribonuclease that initiates mRNA decay. This Geobacter sulfurreducens (strain ATCC 51573 / DSM 12127 / PCA) protein is Ribonuclease Y.